The sequence spans 341 residues: D-aspartate oxidase (341 aa).

FAD contacts are provided by aspartate 36, lysine 37, threonine 43, serine 44, methionine 50, glycine 307, and isoleucine 311. A Microbody targeting signal motif is present at residues serine 339–leucine 341.

This sequence belongs to the DAMOX/DASOX family. As to quaternary structure, homotetramer. Interacts with PEX5; the interaction is direct and required for localization of DDO to the peroxisome. FAD is required as a cofactor. Expressed in epithelial cells of the renal proximal tubules (not detected in the glomeruli or renal distal tubules), liver, right atrium of heart, lung, chief cells of the gastric mucosa, choroid plexus, pia mater, brain stem, midbrain, pons, medulla oblongata, hypothalamus, hippocampus, cerebral cortex, cerebellum, ependyma, olfactory bulb and the pituitary, pineal, thyroid and adrenal glands (at protein level).

It localises to the peroxisome matrix. It is found in the cytoplasm. Its subcellular location is the cytosol. The enzyme catalyses D-aspartate + O2 + H2O = oxaloacetate + H2O2 + NH4(+). It catalyses the reaction D-glutamate + O2 + H2O = H2O2 + 2-oxoglutarate + NH4(+). Selectively catalyzes the oxidative deamination of acidic amino acids. Suppresses the level of D-aspartate in the brain, an amino acid that can act as an agonist for glutamate receptors. Protects the organism from the toxicity of D-amino acids. May also function in the intestine. In Sus scrofa (Pig), this protein is D-aspartate oxidase (DDO).